We begin with the raw amino-acid sequence, 445 residues long: Tubby-like F-box protein 10 (445 aa).

One can recognise an F-box domain in the interval 57–112; sequence SRWANLPPELLFDVIKRLEESESNWPARKHVVACASVCRSWRAMCQEIVLGPEICG. Positions 382–398 are enriched in low complexity; the sequence is PQPQGTGAAAAPTSAPA. The interval 382–401 is disordered; that stretch reads PQPQGTGAAAAPTSAPAHPE.

The protein belongs to the TUB family. As to quaternary structure, part of a SCF (ASK-cullin-F-box) protein ligase complex. Interacts with SKP1A/ASK1. Ubiquitous.

The protein resides in the nucleus. Its pathway is protein modification; protein ubiquitination. Its function is as follows. Component of SCF(ASK-cullin-F-box) E3 ubiquitin ligase complexes, which may mediate the ubiquitination and subsequent proteasomal degradation of target proteins. This chain is Tubby-like F-box protein 10, found in Arabidopsis thaliana (Mouse-ear cress).